Consider the following 1495-residue polypeptide: Collagen alpha-1(XVII) chain (1495 aa).

Positions 1 to 17 are enriched in basic and acidic residues; sequence MDSVTKKTRQDGSEVTE. The disordered stretch occupies residues 1-138; sequence MDSVTKKTRQ…VRLQSASPSG (138 aa). Topologically, residues 1-435 are cytoplasmic; that stretch reads MDSVTKKTRQ…CGSCCSWWKW (435 aa). A nonhelical region (NC16) region spans residues 1-535; the sequence is MDSVTKKTRQ…IERGYFRGER (535 aa). The segment covering 19 to 32 has biased composition (polar residues); that stretch reads QGGSSSGLKTSSHT. Positions 51–63 are enriched in low complexity; that stretch reads SSGSGRLNSSSSG. Polar residues-rich tracts occupy residues 64 to 80 and 95 to 104; these read YRQTQSPSSTLTKSPGS and EGSSSANSSP. The helical; Signal-anchor for type II membrane protein transmembrane segment at 436–456 threads the bilayer; sequence LLGLLLAWLLLLGLLFGLIAL. The Extracellular portion of the chain corresponds to 457 to 1495; that stretch reads AEEVRKLKSR…GRRRRRSVGV (1039 aa). Disordered regions lie at residues 532-824, 847-999, 1160-1185, 1201-1226, 1251-1278, 1295-1336, and 1396-1416; these read RGER…EKGS, DLQG…SSSQ, EFSGLVGPPGPAGPPGPPGIPGSSGI, SISGIQGPPGPPGPPGPPGFSGTGLL, RSYISGPPGPPGPRGPPGPKGDSGLVAG, GGSI…GSYG, and MSYTGQGPPGPPGPPGPPGIS. The segment at 536–1482 is triple-helical region; it reads GEPGMKGDMG…KGEKGEKGEQ (947 aa). 2 stretches are compositionally biased toward low complexity: residues 702-711 and 761-773; these read PGAKGPAGQA and RPGAKGEPGAPGK. Residues 786–807 show a composition bias toward pro residues; it reads PGPPGPPGPIGPTGPPGVPGPV. Positions 809–818 are enriched in low complexity; the sequence is PAGLPGQQGP. 7 stretches are compositionally biased toward pro residues: residues 871-886, 901-910, 946-955, 981-993, 1167-1179, 1208-1218, and 1257-1269; these read PRGPPGLPGPSGPPGR, PPGPPGPPGP, PPGPPGPPGPPGP, PPGPAGPPGPPGI, PPGPPGPPGPP, and PPGPPGPRGPPGP. Gly residues predominate over residues 1296-1308; sequence GSIGAEGSHGGSL. The span at 1309-1336 shows a compositional bias: low complexity; it reads GASSSYGSSMSSSMSSYSASMGSDGSYG. Positions 1403–1413 are enriched in pro residues; sequence PPGPPGPPGPP. Asn-1424 carries an N-linked (GlcNAc...) asparagine glycan. The segment at 1435–1495 is disordered; it reads THGTVRGPPG…GRRRRRSVGV (61 aa). Positions 1472 to 1481 are enriched in basic and acidic residues; it reads PKGEKGEKGE. Residues 1483 to 1495 are nonhelical region (NC1); that stretch reads MYSGRRRRRSVGV. Residues 1486–1495 are compositionally biased toward basic residues; that stretch reads GRRRRRSVGV.

In terms of assembly, homotrimers of alpha 1(XVII)chains. Post-translationally, the intracellular/endo domain is disulfide-linked. Prolines at the third position of the tripeptide repeating unit (G-X-Y) are hydroxylated in some or all of the chains. In terms of processing, the ectodomain is shedded from the surface of keratinocytes resulting in a 120-kDa soluble form, also named as 120 kDa linear IgA disease antigen homolog. The shedding is mediated by membrane-bound metalloproteases. Cornea specific.

Its subcellular location is the cell junction. The protein resides in the hemidesmosome. The protein localises to the membrane. It localises to the secreted. It is found in the extracellular space. Its subcellular location is the extracellular matrix. The protein resides in the basement membrane. Functionally, may play a role in the integrity of hemidesmosome and the attachment of basal keratinocytes to the underlying basement membrane. In terms of biological role, the 120 kDa linear IgA disease antigen homolog is an anchoring filament component involved in dermal-epidermal cohesion. The protein is Collagen alpha-1(XVII) chain (COL17A1) of Gallus gallus (Chicken).